Consider the following 647-residue polypeptide: Pre-mRNA-splicing factor SLU7 (647 aa).

Over residues 1 to 19 the composition is skewed to polar residues; the sequence is MASYKQNLPPSALIKQQVN. The segment at 1–44 is disordered; that stretch reads MASYKQNLPPSALIKQQVNVADKKSKAEVQRDRQLEEDRKAGTA. Residues 21–41 show a composition bias toward basic and acidic residues; that stretch reads ADKKSKAEVQRDRQLEEDRKA. The CCHC-type zinc finger occupies 113–130; the sequence is GACENCGAMGHQKRDCFD. Disordered stretches follow at residues 193–212 and 465–620; these read HEMK…APKD and EVKE…KEME. Positions 465–479 are enriched in basic and acidic residues; it reads EVKEEKEKEDSIKDE. Over residues 480-491 the composition is skewed to acidic residues; it reads VAEENSDNDNDE. A compositionally biased stretch (basic and acidic residues) spans 513–533; the sequence is EKEREKERLIEKERRERDQRR. Positions 534–555 are enriched in basic residues; it reads RDKKREKRERKKAKLGKRKRRH. The segment covering 588–606 has biased composition (basic and acidic residues); that stretch reads EKAEGMKAAREGDRGRKYN.

Belongs to the SLU7 family.

Its subcellular location is the nucleus. Participates in the second catalytic step of pre-mRNA splicing, when the free hydroxyl group of exon I attacks the 3'-splice site to generate spliced mRNA and the excised lariat intron. This chain is Pre-mRNA-splicing factor SLU7, found in Caenorhabditis elegans.